Reading from the N-terminus, the 344-residue chain is L-threonine 3-dehydrogenase (344 aa).

Cys38 is a binding site for Zn(2+). Active-site charge relay system residues include Thr40 and His43. Zn(2+)-binding residues include His63, Glu64, Cys93, Cys96, Cys99, and Cys107. Residues Ile175, Asp195, Arg200, 263–265 (LGI), and 287–288 (IY) contribute to the NAD(+) site.

This sequence belongs to the zinc-containing alcohol dehydrogenase family. Homotetramer. Zn(2+) is required as a cofactor.

The protein resides in the cytoplasm. The catalysed reaction is L-threonine + NAD(+) = (2S)-2-amino-3-oxobutanoate + NADH + H(+). Its pathway is amino-acid degradation; L-threonine degradation via oxydo-reductase pathway; glycine from L-threonine: step 1/2. In terms of biological role, catalyzes the NAD(+)-dependent oxidation of L-threonine to 2-amino-3-ketobutyrate. The chain is L-threonine 3-dehydrogenase from Deinococcus deserti (strain DSM 17065 / CIP 109153 / LMG 22923 / VCD115).